Here is a 302-residue protein sequence, read N- to C-terminus: tRNA pseudouridine synthase B (302 aa).

The active-site Nucleophile is the D45.

The protein belongs to the pseudouridine synthase TruB family. Type 1 subfamily.

It carries out the reaction uridine(55) in tRNA = pseudouridine(55) in tRNA. In terms of biological role, responsible for synthesis of pseudouridine from uracil-55 in the psi GC loop of transfer RNAs. This Francisella tularensis subsp. holarctica (strain FTNF002-00 / FTA) protein is tRNA pseudouridine synthase B.